A 325-amino-acid chain; its full sequence is Probable flavonol synthase 5 (325 aa).

Positions 1 to 21 (MEEERDHNASESSLPSLSKQL) are disordered. Positions 10 to 21 (SESSLPSLSKQL) are enriched in polar residues. The Fe2OG dioxygenase domain occupies 180–280 (TAEYVLRVNF…RISWPVFVAP (101 aa)). 188 to 190 (NFY) provides a ligand contact to 2-oxoglutarate. Fe cation-binding residues include His-205, Asp-207, and His-261. Residue 271–273 (RIS) coordinates 2-oxoglutarate.

This sequence belongs to the iron/ascorbate-dependent oxidoreductase family. It depends on Fe(2+) as a cofactor. As to expression, expressed in young seedlings.

The enzyme catalyses a (2R,3R)-dihydroflavonol + 2-oxoglutarate + O2 = a flavonol + succinate + CO2 + H2O. It functions in the pathway secondary metabolite biosynthesis; flavonoid biosynthesis. The polypeptide is Probable flavonol synthase 5 (FLS5) (Arabidopsis thaliana (Mouse-ear cress)).